Consider the following 316-residue polypeptide: Acetyl-coenzyme A carboxylase carboxyl transferase subunit alpha (316 aa).

The CoA carboxyltransferase C-terminal domain occupies 40–293; it reads LERRSKDALR…GETIENGFRE (254 aa).

Belongs to the AccA family. As to quaternary structure, acetyl-CoA carboxylase is a heterohexamer composed of biotin carboxyl carrier protein (AccB), biotin carboxylase (AccC) and two subunits each of ACCase subunit alpha (AccA) and ACCase subunit beta (AccD).

The protein resides in the cytoplasm. It carries out the reaction N(6)-carboxybiotinyl-L-lysyl-[protein] + acetyl-CoA = N(6)-biotinyl-L-lysyl-[protein] + malonyl-CoA. The protein operates within lipid metabolism; malonyl-CoA biosynthesis; malonyl-CoA from acetyl-CoA: step 1/1. Functionally, component of the acetyl coenzyme A carboxylase (ACC) complex. First, biotin carboxylase catalyzes the carboxylation of biotin on its carrier protein (BCCP) and then the CO(2) group is transferred by the carboxyltransferase to acetyl-CoA to form malonyl-CoA. In Chelativorans sp. (strain BNC1), this protein is Acetyl-coenzyme A carboxylase carboxyl transferase subunit alpha.